Here is a 229-residue protein sequence, read N- to C-terminus: Transmembrane emp24 domain-containing protein 5 (229 aa).

An N-terminal signal peptide occupies residues 1-27 (MGDKIWLPFPVLLLAALPPVLLPGAAG). Over 28–196 (FTPSLDSDFT…IQESNFDRVN (169 aa)) the chain is Lumenal. The GOLD domain occupies 45–126 (RECFYQPMPL…EKVIFFELIL (82 aa)). Residues 197-217 (FWSMVNLVVMVVVSAIQVYML) form a helical membrane-spanning segment. Residues 218 to 229 (KSLFEDKRKSRT) lie on the Cytoplasmic side of the membrane.

It belongs to the EMP24/GP25L family. In terms of assembly, interacts with TMED9 and TMED10.

It localises to the endoplasmic reticulum membrane. The protein localises to the golgi apparatus. The protein resides in the cis-Golgi network membrane. It is found in the endoplasmic reticulum-Golgi intermediate compartment membrane. Potential role in vesicular protein trafficking, mainly in the early secretory pathway. Required for the maintenance of the Golgi apparatus; involved in protein exchange between Golgi stacks during assembly. Probably not required for COPI-vesicle-mediated retrograde transport. The protein is Transmembrane emp24 domain-containing protein 5 (TMED5) of Pongo abelii (Sumatran orangutan).